We begin with the raw amino-acid sequence, 134 residues long: Small ribosomal subunit protein uS8c (134 aa).

Belongs to the universal ribosomal protein uS8 family. Part of the 30S ribosomal subunit.

The protein localises to the plastid. In terms of biological role, one of the primary rRNA binding proteins, it binds directly to 16S rRNA central domain where it helps coordinate assembly of the platform of the 30S subunit. The polypeptide is Small ribosomal subunit protein uS8c (rps8) (Cuscuta gronovii (Common dodder)).